Reading from the N-terminus, the 311-residue chain is Olfactory receptor 5AN1 (311 aa).

Residues Met-1–Lys-26 lie on the Extracellular side of the membrane. A glycan (N-linked (GlcNAc...) asparagine) is linked at Asn-6. Residues Val-27–Ile-47 traverse the membrane as a helical segment. The Cytoplasmic segment spans residues Val-48–His-55. Residues Leu-56–Ser-76 form a helical membrane-spanning segment. Over Ser-77–Ile-100 the chain is Extracellular. Cys-98 and Cys-190 form a disulfide bridge. A helical transmembrane segment spans residues Gln-101–Tyr-121. Over Asp-122 to Ser-134 the chain is Cytoplasmic. Residues Ser-135–Thr-155 traverse the membrane as a helical segment. Residues Ala-156–Gln-197 lie on the Extracellular side of the membrane. The chain crosses the membrane as a helical span at residues Val-198–Ser-218. Residues Tyr-219 to Ala-238 are Cytoplasmic-facing. The chain crosses the membrane as a helical span at residues Phe-239–Val-259. At Tyr-260–Asp-272 the chain is on the extracellular side. A helical transmembrane segment spans residues Arg-273 to Leu-293. Topologically, residues Arg-294 to Cys-311 are cytoplasmic.

Belongs to the G-protein coupled receptor 1 family.

The protein resides in the cell membrane. Functionally, odorant receptor for musk, which specifically recognizes muscone, musk xylol, and musk ketone. Ligand-binding causes a conformation change that triggers signaling via G(s)-class of G alpha protein GNAL, activating adenylyl cyclase. The chain is Olfactory receptor 5AN1 from Homo sapiens (Human).